The primary structure comprises 92 residues: Elongation factor 1-beta (92 aa).

Belongs to the EF-1-beta/EF-1-delta family.

Promotes the exchange of GDP for GTP in EF-1-alpha/GDP, thus allowing the regeneration of EF-1-alpha/GTP that could then be used to form the ternary complex EF-1-alpha/GTP/AAtRNA. This is Elongation factor 1-beta from Pyrobaculum arsenaticum (strain DSM 13514 / JCM 11321 / PZ6).